Consider the following 420-residue polypeptide: D-tagatose-1,6-bisphosphate aldolase subunit GatZ (420 aa).

This sequence belongs to the GatZ/KbaZ family. GatZ subfamily. Forms a complex with GatY.

It functions in the pathway carbohydrate metabolism; D-tagatose 6-phosphate degradation; D-glyceraldehyde 3-phosphate and glycerone phosphate from D-tagatose 6-phosphate: step 2/2. Functionally, component of the tagatose-1,6-bisphosphate aldolase GatYZ that is required for full activity and stability of the Y subunit. Could have a chaperone-like function for the proper and stable folding of GatY. When expressed alone, GatZ does not show any aldolase activity. Is involved in the catabolism of galactitol. The sequence is that of D-tagatose-1,6-bisphosphate aldolase subunit GatZ from Escherichia coli O139:H28 (strain E24377A / ETEC).